Consider the following 350-residue polypeptide: Protein O-mannose kinase (350 aa).

M1 carries the post-translational modification N-acetylmethionine. The Cytoplasmic segment spans residues 1-20; sequence MEKQPQNSRRGLAPREVPPA. Residues 21 to 43 traverse the membrane as a helical; Signal-anchor for type II membrane protein segment; the sequence is VGLLLIMALMNTLLYLCLDHFFI. The Lumenal portion of the chain corresponds to 44-350; that stretch reads APRQSTVDPT…AMMSQAREML (307 aa). The region spanning 81–350 is the Protein kinase domain; it reads VRQLKRVGEG…AMMSQAREML (270 aa). N-linked (GlcNAc...) asparagine glycosylation is found at N165, N220, and N235.

It belongs to the protein kinase superfamily. Ser/Thr protein kinase family. STKL subfamily. Highest expression is observed in brain, skeletal muscle, kidney and heart in fetal and adult tissues.

Its subcellular location is the endoplasmic reticulum membrane. It carries out the reaction 3-O-[beta-D-GalNAc-(1-&gt;3)-beta-D-GlcNAc-(1-&gt;4)-alpha-D-Man]-L-Thr-[protein] + ATP = 3-O-[beta-D-GalNAc-(1-&gt;3)-beta-D-GlcNAc-(1-&gt;4)-(O-6-P-alpha-D-Man)]-Thr-[protein] + ADP + H(+). Protein O-mannose kinase that specifically mediates phosphorylation at the 6-position of an O-mannose of the trisaccharide (N-acetylgalactosamine (GalNAc)-beta-1,3-N-acetylglucosamine (GlcNAc)-beta-1,4-mannose) to generate phosphorylated O-mannosyl trisaccharide (N-acetylgalactosamine-beta-1,3-N-acetylglucosamine-beta-1,4-(phosphate-6-)mannose). Phosphorylated O-mannosyl trisaccharide is a carbohydrate structure present in alpha-dystroglycan (DAG1), which is required for binding laminin G-like domain-containing extracellular proteins with high affinity. Only shows kinase activity when the GalNAc-beta-3-GlcNAc-beta-terminus is linked to the 4-position of O-mannose, suggesting that this disaccharide serves as the substrate recognition motif. This chain is Protein O-mannose kinase (POMK), found in Homo sapiens (Human).